Here is a 441-residue protein sequence, read N- to C-terminus: BTB/POZ domain-containing protein At2g24240 (441 aa).

One can recognise a BTB domain in the interval 6-76 (DRIKFNVGGR…LRTGDLNVPA (71 aa)).

It functions in the pathway protein modification; protein ubiquitination. Its function is as follows. May act as a substrate-specific adapter of an E3 ubiquitin-protein ligase complex (CUL3-RBX1-BTB) which mediates the ubiquitination and subsequent proteasomal degradation of target proteins. In Arabidopsis thaliana (Mouse-ear cress), this protein is BTB/POZ domain-containing protein At2g24240.